The following is a 230-amino-acid chain: Ribosomal RNA small subunit methyltransferase I (230 aa).

It belongs to the methyltransferase superfamily. RsmI family.

It localises to the cytoplasm. The enzyme catalyses cytidine(1402) in 16S rRNA + S-adenosyl-L-methionine = 2'-O-methylcytidine(1402) in 16S rRNA + S-adenosyl-L-homocysteine + H(+). Functionally, catalyzes the 2'-O-methylation of the ribose of cytidine 1402 (C1402) in 16S rRNA. The protein is Ribosomal RNA small subunit methyltransferase I of Hydrogenobaculum sp. (strain Y04AAS1).